Here is a 40-residue protein sequence, read N- to C-terminus: U1-ectatotoxin-Eb1a subunit A (40 aa).

The protein belongs to the ectatomin family. Ectatomin-Eq subfamily. As to quaternary structure, heterodimer of subunits A and B; disulfide-linked. In terms of tissue distribution, expressed by the venom gland.

The protein resides in the secreted. It localises to the target cell membrane. The sequence is that of U1-ectatotoxin-Eb1a subunit A from Ectatomma brunneum (Ant).